Reading from the N-terminus, the 62-residue chain is UPF0434 protein ABO_2103 (62 aa).

The protein belongs to the UPF0434 family.

This Alcanivorax borkumensis (strain ATCC 700651 / DSM 11573 / NCIMB 13689 / SK2) protein is UPF0434 protein ABO_2103.